We begin with the raw amino-acid sequence, 526 residues long: Light-independent protochlorophyllide reductase subunit B (526 aa).

Residue D36 coordinates [4Fe-4S] cluster. Residue D290 is the Proton donor of the active site. A substrate-binding site is contributed by G425 to L426.

Belongs to the ChlB/BchB/BchZ family. Protochlorophyllide reductase is composed of three subunits; ChlL, ChlN and ChlB. Forms a heterotetramer of two ChlB and two ChlN subunits. [4Fe-4S] cluster is required as a cofactor.

It carries out the reaction chlorophyllide a + oxidized 2[4Fe-4S]-[ferredoxin] + 2 ADP + 2 phosphate = protochlorophyllide a + reduced 2[4Fe-4S]-[ferredoxin] + 2 ATP + 2 H2O. Its pathway is porphyrin-containing compound metabolism; chlorophyll biosynthesis (light-independent). Its function is as follows. Component of the dark-operative protochlorophyllide reductase (DPOR) that uses Mg-ATP and reduced ferredoxin to reduce ring D of protochlorophyllide (Pchlide) to form chlorophyllide a (Chlide). This reaction is light-independent. The NB-protein (ChlN-ChlB) is the catalytic component of the complex. The chain is Light-independent protochlorophyllide reductase subunit B from Prochlorococcus marinus subsp. pastoris (strain CCMP1986 / NIES-2087 / MED4).